Reading from the N-terminus, the 598-residue chain is Centrosomal protein of 70 kDa (598 aa).

The segment covering 16–38 (DSTKEPLSTVTSQAQDSSLSANR) has biased composition (polar residues). Residues 16–43 (DSTKEPLSTVTSQAQDSSLSANRPVTEK) are disordered. Coiled coils occupy residues 99 to 210 (TRQQ…EEDR) and 255 to 317 (TYKG…NIKL). One copy of the TPR repeat lies at 484-517 (NGVYPRMNEVYARLGEMNNAVRNLQELLGLDSSS).

As to quaternary structure, directly interacts with tubulin-gamma; this interaction determines centrosomal localization.

It localises to the cytoplasm. The protein resides in the cytoskeleton. It is found in the microtubule organizing center. Its subcellular location is the centrosome. Its function is as follows. Plays a role in the organization of both preexisting and nascent microtubules in interphase cells. During mitosis, required for the organization and orientation of the mitotic spindle. The chain is Centrosomal protein of 70 kDa (Cep70) from Rattus norvegicus (Rat).